The primary structure comprises 57 residues: Protein GnsB (57 aa).

This sequence belongs to the gns family.

Functionally, overexpression increases levels of unsaturated fatty acids and suppresses both the temperature-sensitive fabA6 mutation and cold-sensitive secG null mutation. This chain is Protein GnsB (gnsB), found in Escherichia coli (strain K12).